Consider the following 525-residue polypeptide: D-arabinono-1,4-lactone oxidase (525 aa).

Positions 20-195 constitute an FAD-binding PCMH-type domain; that stretch reads IYSSRPEWYF…VGATVRVVPA (176 aa). Histidine 58 is subject to Pros-8alpha-FAD histidine.

The protein belongs to the oxygen-dependent FAD-linked oxidoreductase family. The cofactor is FAD.

The protein localises to the mitochondrion membrane. The enzyme catalyses D-arabinono-1,4-lactone + O2 = dehydro-D-arabinono-1,4-lactone + H2O2 + H(+). It functions in the pathway cofactor biosynthesis; D-erythroascorbate biosynthesis; dehydro-D-arabinono-1,4-lactone from D-arabinose: step 2/2. This is D-arabinono-1,4-lactone oxidase (ALO1) from Candida glabrata (strain ATCC 2001 / BCRC 20586 / JCM 3761 / NBRC 0622 / NRRL Y-65 / CBS 138) (Yeast).